The sequence spans 119 residues: MSSHNDLGRASELAARQHLERNGLRLIQQNWSCRRGELDLVMLDGDTVVFVEVRARRHSAWGGALESVDARKRGKLVMAAELFLQQNSRWARHPCRFDVVAISTEGATRLDWIKNAFDA.

This sequence belongs to the UPF0102 family.

This is UPF0102 protein Pmen_0910 from Ectopseudomonas mendocina (strain ymp) (Pseudomonas mendocina).